Here is a 354-residue protein sequence, read N- to C-terminus: Polyprenal reductase 1 (354 aa).

The next 6 helical transmembrane spans lie at Pro-11 to Ile-31, Phe-78 to Phe-98, Tyr-141 to Leu-158, Met-176 to Ala-196, Pro-235 to Leu-255, and Gly-301 to Ile-321.

The protein belongs to the steroid 5-alpha reductase family. Polyprenal reductase subfamily.

It localises to the cell membrane. The enzyme catalyses a di-trans,poly-cis-dolichal + NADP(+) = a di-trans,poly-cis-polyprenal + NADPH + H(+). It functions in the pathway protein modification; protein glycosylation. Its function is as follows. Plays a key role in early steps of protein N-linked glycosylation by being involved in the conversion of polyprenol into dolichol. Acts as a polyprenal reductase that mediates the reduction of polyprenal into dolichal in a NADP-dependent mechanism. Dolichols are required for the synthesis of dolichol-linked monosaccharides and the oligosaccharide precursor used for N-glycosylation. The polypeptide is Polyprenal reductase 1 (Oryza sativa subsp. indica (Rice)).